Consider the following 458-residue polypeptide: Bifunctional protein GlmU (458 aa).

Positions 1-229 (MNKFAIVLAA…FDESLGVNDR (229 aa)) are pyrophosphorylase. Residues 8–11 (LAAG), lysine 22, glutamine 72, and 77–78 (GT) contribute to the UDP-N-acetyl-alpha-D-glucosamine site. A Mg(2+)-binding site is contributed by aspartate 102. 4 residues coordinate UDP-N-acetyl-alpha-D-glucosamine: glycine 139, glutamate 154, asparagine 169, and asparagine 227. Asparagine 227 is a Mg(2+) binding site. Residues 230–250 (VALSQAEGTMRKRINHEHMVN) are linker. The N-acetyltransferase stretch occupies residues 251–458 (GVTLIDPATT…AKKMPHYRGQ (208 aa)). UDP-N-acetyl-alpha-D-glucosamine is bound by residues arginine 332 and lysine 350. Residue histidine 362 is the Proton acceptor of the active site. UDP-N-acetyl-alpha-D-glucosamine is bound by residues tyrosine 365 and asparagine 376. Acetyl-CoA is bound by residues alanine 379, serine 404, alanine 422, and arginine 439.

In the N-terminal section; belongs to the N-acetylglucosamine-1-phosphate uridyltransferase family. The protein in the C-terminal section; belongs to the transferase hexapeptide repeat family. In terms of assembly, homotrimer. The cofactor is Mg(2+).

The protein localises to the cytoplasm. The enzyme catalyses alpha-D-glucosamine 1-phosphate + acetyl-CoA = N-acetyl-alpha-D-glucosamine 1-phosphate + CoA + H(+). It catalyses the reaction N-acetyl-alpha-D-glucosamine 1-phosphate + UTP + H(+) = UDP-N-acetyl-alpha-D-glucosamine + diphosphate. It participates in nucleotide-sugar biosynthesis; UDP-N-acetyl-alpha-D-glucosamine biosynthesis; N-acetyl-alpha-D-glucosamine 1-phosphate from alpha-D-glucosamine 6-phosphate (route II): step 2/2. It functions in the pathway nucleotide-sugar biosynthesis; UDP-N-acetyl-alpha-D-glucosamine biosynthesis; UDP-N-acetyl-alpha-D-glucosamine from N-acetyl-alpha-D-glucosamine 1-phosphate: step 1/1. Its pathway is bacterial outer membrane biogenesis; LPS lipid A biosynthesis. Its function is as follows. Catalyzes the last two sequential reactions in the de novo biosynthetic pathway for UDP-N-acetylglucosamine (UDP-GlcNAc). The C-terminal domain catalyzes the transfer of acetyl group from acetyl coenzyme A to glucosamine-1-phosphate (GlcN-1-P) to produce N-acetylglucosamine-1-phosphate (GlcNAc-1-P), which is converted into UDP-GlcNAc by the transfer of uridine 5-monophosphate (from uridine 5-triphosphate), a reaction catalyzed by the N-terminal domain. This chain is Bifunctional protein GlmU, found in Lactococcus lactis subsp. cremoris (strain SK11).